The primary structure comprises 765 residues: Phosphoribosylformylglycinamidine synthase subunit PurL (765 aa).

The active site involves H59. Residues Y62 and K104 each contribute to the ATP site. Residue E106 coordinates Mg(2+). Residues S107–H110 and R129 each bind substrate. H108 functions as the Proton acceptor in the catalytic mechanism. Residue D130 participates in Mg(2+) binding. Q254 is a substrate binding site. D282 lines the Mg(2+) pocket. E326–Q328 contacts substrate. The ATP site is built by N522 and G559. N560 contributes to the Mg(2+) binding site. S562 serves as a coordination point for substrate.

The protein belongs to the FGAMS family. In terms of assembly, monomer. Part of the FGAM synthase complex composed of 1 PurL, 1 PurQ and 2 PurS subunits.

The protein localises to the cytoplasm. It catalyses the reaction N(2)-formyl-N(1)-(5-phospho-beta-D-ribosyl)glycinamide + L-glutamine + ATP + H2O = 2-formamido-N(1)-(5-O-phospho-beta-D-ribosyl)acetamidine + L-glutamate + ADP + phosphate + H(+). It participates in purine metabolism; IMP biosynthesis via de novo pathway; 5-amino-1-(5-phospho-D-ribosyl)imidazole from N(2)-formyl-N(1)-(5-phospho-D-ribosyl)glycinamide: step 1/2. Its function is as follows. Part of the phosphoribosylformylglycinamidine synthase complex involved in the purines biosynthetic pathway. Catalyzes the ATP-dependent conversion of formylglycinamide ribonucleotide (FGAR) and glutamine to yield formylglycinamidine ribonucleotide (FGAM) and glutamate. The FGAM synthase complex is composed of three subunits. PurQ produces an ammonia molecule by converting glutamine to glutamate. PurL transfers the ammonia molecule to FGAR to form FGAM in an ATP-dependent manner. PurS interacts with PurQ and PurL and is thought to assist in the transfer of the ammonia molecule from PurQ to PurL. The sequence is that of Phosphoribosylformylglycinamidine synthase subunit PurL from Thermobifida fusca (strain YX).